Consider the following 778-residue polypeptide: Lon protease (778 aa).

In terms of domain architecture, Lon N-terminal spans 6–207 (LPLMALRDMV…TVISMLNSNI (202 aa)). Residue 356–363 (GPPGVGKT) coordinates ATP. A Lon proteolytic domain is found at 592–773 (EDQIGSTTGL…DQVLKHALVG (182 aa)). Residues Ser679 and Lys722 contribute to the active site.

It belongs to the peptidase S16 family. As to quaternary structure, homohexamer. Organized in a ring with a central cavity.

It localises to the cytoplasm. The catalysed reaction is Hydrolysis of proteins in presence of ATP.. ATP-dependent serine protease that mediates the selective degradation of mutant and abnormal proteins as well as certain short-lived regulatory proteins. Required for cellular homeostasis and for survival from DNA damage and developmental changes induced by stress. Degrades polypeptides processively to yield small peptide fragments that are 5 to 10 amino acids long. Binds to DNA in a double-stranded, site-specific manner. This chain is Lon protease, found in Rickettsia conorii (strain ATCC VR-613 / Malish 7).